The sequence spans 197 residues: Peptidyl-tRNA hydrolase (197 aa).

Y21 is a binding site for tRNA. Catalysis depends on H26, which acts as the Proton acceptor. Residues Y72, N74, and N120 each coordinate tRNA.

Belongs to the PTH family. As to quaternary structure, monomer.

The protein resides in the cytoplasm. It carries out the reaction an N-acyl-L-alpha-aminoacyl-tRNA + H2O = an N-acyl-L-amino acid + a tRNA + H(+). Functionally, hydrolyzes ribosome-free peptidyl-tRNAs (with 1 or more amino acids incorporated), which drop off the ribosome during protein synthesis, or as a result of ribosome stalling. Its function is as follows. Catalyzes the release of premature peptidyl moieties from peptidyl-tRNA molecules trapped in stalled 50S ribosomal subunits, and thus maintains levels of free tRNAs and 50S ribosomes. The chain is Peptidyl-tRNA hydrolase from Alkalilimnicola ehrlichii (strain ATCC BAA-1101 / DSM 17681 / MLHE-1).